Here is a 154-residue protein sequence, read N- to C-terminus: Small heat shock protein IbpB (154 aa).

The region spanning 26–137 (GQEPQGFPPY…QPQRIAIGSA (112 aa)) is the sHSP domain.

Belongs to the small heat shock protein (HSP20) family. As to quaternary structure, homodimer. Forms homomultimers of about 100-150 subunits at optimal growth temperatures. Conformation changes to oligomers at high temperatures or high ionic concentrations. The decrease in size of the multimers is accompanied by an increase in chaperone activity.

Its subcellular location is the cytoplasm. Its function is as follows. Associates with aggregated proteins, together with IbpA, to stabilize and protect them from irreversible denaturation and extensive proteolysis during heat shock and oxidative stress. Aggregated proteins bound to the IbpAB complex are more efficiently refolded and reactivated by the ATP-dependent chaperone systems ClpB and DnaK/DnaJ/GrpE. Its activity is ATP-independent. The chain is Small heat shock protein IbpB from Yersinia pseudotuberculosis serotype O:1b (strain IP 31758).